Consider the following 515-residue polypeptide: MYPRGVKRSHHDYHRQTAFRTIKRSTHRQTSKFISHFAKNFRGKLAPLKQLDESRLDALSLTELEQLKTIIEEKQQEKRAQNNAITFLPNLPTVPFADTNFSLKSLGLRPYNGDARDPKQRIRDRFPQTHERICLLTNDILETDLLLRYRQCLDSLTREENQQLMGDRIFSLTNSPCLAFTVATVEEACSYFKFHDLHNLPVNPQDLFMYTITVMKFEFFNKLNMAKLTCVFNDNGHGDIEYRKLRQLCGKPVLDREMPNSELEVQQQTPDSFRHPIQQAMSIVVTFARILRQIKEQIIQTKKPQFIRDFDTGRVAERYECGLMSRLIGKQFSNHKCDDVSCQNRIERIMAPWKPSLFFCTYFAKDAPKFKLFPNFPEEYRNLSFTCPKVDTEPSCSYSTNHDLPQTSHRSHKNHGTPKVKSKVCVEKPDTSILTTTKTTTEILIEESMETDNKIPNPRELNFNQAKQEEIVIININENVNSKHESESSVEMDLDLDYEADTCETNLNACSSDSE.

Residues Cys-230, His-335, Cys-337, and Cys-342 each coordinate Zn(2+). Residues 230–342 form a CHC2-type zinc finger; that stretch reads CVFNDNGHGD…SNHKCDDVSC (113 aa). Over residues 398 to 408 the composition is skewed to polar residues; it reads YSTNHDLPQTS. The disordered stretch occupies residues 398–422; that stretch reads YSTNHDLPQTSHRSHKNHGTPKVKS. Over residues 409-422 the composition is skewed to basic residues; the sequence is HRSHKNHGTPKVKS.

It belongs to the HHV-1 ICP27 protein family.

It localises to the virion tegument. It is found in the virion. Its subcellular location is the host nucleus. The protein localises to the host cytoplasm. Functionally, immediate early (EI) protein that plays many roles during productive infection including regulation of viral gene expression and nuclear export of intronless viral RNAs. The sequence is that of mRNA export factor ICP27 homolog from Human herpesvirus 6A (strain Uganda-1102) (HHV-6 variant A).